Here is a 298-residue protein sequence, read N- to C-terminus: Lysozyme-like protein 1 (298 aa).

Residues 1–16 form the signal peptide; sequence MLKLAFVTFLFALASA. A Ch-type lysozyme domain is found at 59 to 277; that stretch reads YAYAVDISVP…AAASSKNTDF (219 aa).

The protein belongs to the glycosyl hydrolase 25 family. As to expression, expressed in intestine, IL2 and IL6 neurons and some neurons in the head ganglia.

It localises to the cytoplasmic vesicle lumen. Functionally, involved in resistance to Gram-negative bacterium S.marcescens and to bacterium Gram-positive S.aureus infection. The chain is Lysozyme-like protein 1 from Caenorhabditis elegans.